The chain runs to 60 residues: Beta-defensin 11 (60 aa).

An N-terminal signal peptide occupies residues 1–22; that stretch reads MRLHHLLLALLFLVLSAGSGIS. 3 cysteine pairs are disulfide-bonded: cysteine 27–cysteine 56, cysteine 34–cysteine 49, and cysteine 39–cysteine 57.

Belongs to the beta-defensin family. Neutrophilic granules.

It localises to the secreted. Its function is as follows. Has bactericidal activity. Active against E.coli ML35 and S.aureus 502A. The sequence is that of Beta-defensin 11 (DEFB11) from Bos taurus (Bovine).